We begin with the raw amino-acid sequence, 128 residues long: Large ribosomal subunit protein bL12 (128 aa).

It belongs to the bacterial ribosomal protein bL12 family. Homodimer. Part of the ribosomal stalk of the 50S ribosomal subunit. Forms a multimeric L10(L12)X complex, where L10 forms an elongated spine to which 2 to 4 L12 dimers bind in a sequential fashion. Binds GTP-bound translation factors.

In terms of biological role, forms part of the ribosomal stalk which helps the ribosome interact with GTP-bound translation factors. Is thus essential for accurate translation. This chain is Large ribosomal subunit protein bL12, found in Aquifex aeolicus (strain VF5).